A 253-amino-acid polypeptide reads, in one-letter code: Demethylmenaquinone methyltransferase (253 aa).

S-adenosyl-L-methionine-binding positions include T75, D96, and 124 to 125; that span reads DA.

Belongs to the class I-like SAM-binding methyltransferase superfamily. MenG/UbiE family.

It carries out the reaction a 2-demethylmenaquinol + S-adenosyl-L-methionine = a menaquinol + S-adenosyl-L-homocysteine + H(+). It functions in the pathway quinol/quinone metabolism; menaquinone biosynthesis; menaquinol from 1,4-dihydroxy-2-naphthoate: step 2/2. Functionally, methyltransferase required for the conversion of demethylmenaquinol (DMKH2) to menaquinol (MKH2). The sequence is that of Demethylmenaquinone methyltransferase from Desulfitobacterium hafniense (strain Y51).